The sequence spans 521 residues: Probable xyloglucan galactosyltransferase GT14 (521 aa).

Residues 1–30 are Cytoplasmic-facing; the sequence is MRPKNYSQMEKPISITTGKFRTNNNNNHNN. A helical; Signal-anchor for type II membrane protein membrane pass occupies residues 31–51; the sequence is VWFVVPLFFILCFVLLCFDYS. Over 52–521 the chain is Lumenal; the sequence is ALFTDTDETA…SPYEEPQVLA (470 aa). The tract at residues 72–92 is disordered; that stretch reads TSSEFTKDDNFSRFPDDPSPD. Residues 76–87 show a composition bias toward basic and acidic residues; sequence FTKDDNFSRFPD. N-linked (GlcNAc...) asparagine glycosylation is found at Asn81, Asn177, Asn203, Asn249, Asn265, and Asn411. The disordered stretch occupies residues 492 to 521; that stretch reads RQGKDGSDGFDDRDDYKYTFSPYEEPQVLA.

It belongs to the glycosyltransferase 47 family. In terms of tissue distribution, expressed in roots, hypocotyls, cotyledons, leaves, stems, stamens and carpels.

It localises to the golgi apparatus membrane. Functionally, functions in xyloglucan synthesis by adding side chains to the xylosylated glucan backbone. Involved in the galactosylation of hemicellulose xyloglucan. In Arabidopsis thaliana (Mouse-ear cress), this protein is Probable xyloglucan galactosyltransferase GT14.